Consider the following 459-residue polypeptide: DNA primase large subunit (459 aa).

[4Fe-4S] cluster is bound by residues cysteine 291, cysteine 369, cysteine 386, and cysteine 428.

This sequence belongs to the eukaryotic-type primase large subunit family. Heterodimer of a catalytic subunit spp1/pri1 and a regulatory subunit spp2/pri2, also known as the DNA primase complex. Component of the alpha DNA polymerase complex (also known as the alpha DNA polymerase-primase complex) consisting of four subunits: the catalytic subunit pol1, the accessory subunit spb70/pol12, and the primase complex subunits spp1/pri1 and spp2/pri2 respectively. Interacts with orc2; preferentially associates with the unphosphorylated orc2 in G1 pre-Start prior to orc2 being phosphorylated by cdc2, the interaction is mediated by spb70 and might enable the association of the whole alpha DNA polymerase complex to orc2/spb70 complex on chromatin. Requires [4Fe-4S] cluster as cofactor.

It is found in the nucleus. The protein resides in the chromosome. Its function is as follows. Regulatory subunit of the DNA primase complex and component of the DNA polymerase alpha complex (also known as the alpha DNA polymerase-primase complex - primosome/replisome) which play an essential role in the initiation of DNA synthesis. During the S phase of the cell cycle, the DNA polymerase alpha complex (composed of a catalytic subunit pol1, an accessory subunit spb70/pol12 and two primase subunits, the catalytic subunit spp1/pri1 and the regulatory subunit spp2/pri2) is recruited to DNA at the replicative forks. The primase subunit of the polymerase alpha complex initiates DNA synthesis by oligomerising short RNA primers on both leading and lagging strands. In Schizosaccharomyces pombe (strain 972 / ATCC 24843) (Fission yeast), this protein is DNA primase large subunit.